The sequence spans 88 residues: MSDFENLSGNDKELQEFLLIEKQKAQVNAQIHEFNEICWEKCIGKPSTKLDHATETCLSNCVDRFIDTSLLITQRFAQMLQKRGGGDL.

The Twin CX3C motif signature appears at Cys-38 to Cys-61. Cystine bridges form between Cys-38/Cys-61 and Cys-42/Cys-57.

This sequence belongs to the small Tim family. As to quaternary structure, heterohexamer; composed of 3 copies of Tim8 and 3 copies of Tim13, named soluble 70 kDa complex. Associates with the TIM22 complex, whose core is composed of Tim22.

It localises to the mitochondrion inner membrane. Mitochondrial intermembrane chaperone that participates in the import and insertion of some multi-pass transmembrane proteins into the mitochondrial inner membrane. Also required for the transfer of beta-barrel precursors from the TOM complex to the sorting and assembly machinery (SAM complex) of the outer membrane. Acts as a chaperone-like protein that protects the hydrophobic precursors from aggregation and guide them through the mitochondrial intermembrane space. The Tim8-Tim13 complex mediates the import of some proteins while the predominant Tim9-Tim10 70 kDa complex mediates the import of much more proteins. The protein is Mitochondrial import inner membrane translocase subunit Tim8 (Tim8) of Drosophila melanogaster (Fruit fly).